A 734-amino-acid polypeptide reads, in one-letter code: Probable carboxypeptidase X1 (734 aa).

The first 20 residues, Met-1–Gly-20, serve as a signal peptide directing secretion. Residues Ala-30–Gln-62 are disordered. Polar residues predominate over residues Pro-32–Pro-48. N-linked (GlcNAc...) asparagine glycosylation is found at Asn-57, Asn-210, Asn-220, and Asn-318. Residues Thr-113 to Cys-274 form the F5/8 type C domain. An intrachain disulfide couples Cys-115 to Cys-274. The Peptidase M14 domain occupies Gln-298–Val-621. Positions 360 and 363 each coordinate Zn(2+). N-linked (GlcNAc...) asparagine glycosylation is found at Asn-428 and Asn-472. His-498 lines the Zn(2+) pocket. Residue Glu-591 is the Proton donor/acceptor of the active site.

It belongs to the peptidase M14 family. The cofactor is Zn(2+).

The protein resides in the secreted. In terms of biological role, may be involved in cell-cell interactions. No carboxypeptidase activity was found yet. This Homo sapiens (Human) protein is Probable carboxypeptidase X1 (CPXM1).